The sequence spans 344 residues: Glucan endo-1,3-beta-glucosidase (344 aa).

A signal peptide spans 1–27 (MALTRNRPFVVVLLLGFVIMSTITIGA). E123 functions as the Proton donor in the catalytic mechanism. The active-site Nucleophile is the E268.

It belongs to the glycosyl hydrolase 17 family.

It carries out the reaction Hydrolysis of (1-&gt;3)-beta-D-glucosidic linkages in (1-&gt;3)-beta-D-glucans.. Implicated in the defense of plants against pathogens. The protein is Glucan endo-1,3-beta-glucosidase of Vitis vinifera (Grape).